Consider the following 182-residue polypeptide: Adenine phosphoribosyltransferase (182 aa).

This sequence belongs to the purine/pyrimidine phosphoribosyltransferase family. As to quaternary structure, homodimer.

It is found in the cytoplasm. It carries out the reaction AMP + diphosphate = 5-phospho-alpha-D-ribose 1-diphosphate + adenine. It participates in purine metabolism; AMP biosynthesis via salvage pathway; AMP from adenine: step 1/1. Catalyzes a salvage reaction resulting in the formation of AMP, that is energically less costly than de novo synthesis. The sequence is that of Adenine phosphoribosyltransferase from Bordetella pertussis (strain Tohama I / ATCC BAA-589 / NCTC 13251).